The sequence spans 265 residues: Short-chain dehydrogenase/reductase GME11373 (265 aa).

NADP(+) contacts are provided by isoleucine 26, aspartate 72, asparagine 99, and arginine 132. Catalysis depends on proton donor residues serine 148 and serine 149. 3 residues coordinate NADP(+): tyrosine 163, lysine 167, and threonine 198. The Proton acceptor role is filled by tyrosine 163. The active-site Lowers pKa of active site Tyr is lysine 167.

It belongs to the short-chain dehydrogenases/reductases (SDR) family.

The protein operates within secondary metabolite biosynthesis. Short-chain dehydrogenase/reductase; part of the gene cluster that mediates the biosynthesis of dibenzodioxocinones such as pestalotiollide B, a novel class of inhibitors against cholesterol ester transfer protein (CEPT). The biosynthesis initiates from condensation of acetate and malonate units catalyzed by the non-reducing PKS pks8/GME11356. Pks8/GME11356 lacks a thioesterase (TE) domain, which is important to the cyclizing of the third ring of atrochrysone carboxylic acid, and the esterase GME11355 might play the role of TE and catalyzes the cyclization reaction of the C ring. The lactamase-like protein GME11357 (or other beta-lactamases in Pestalotiopsis microspora) probably hydrolyzes the thioester bond between the ACP of pks8/GME11356 and the intermediate to release atrochrysone carboxylic acid, which is spontaneously dehydrates to form endocrocin anthrone. Endocrocin anthrone is further converted to emodin via the endocrocin intermediate. Emodin is then oxidized by several enzymes such as the Baeyer-Villiger oxidase GME11358, the oxidoreductase GME11367, the short chain dehydrogenase/reductase GME11373, as well as by other oxidoreductases from the cluster, to modify the A and C rings and open the B ring, and finally yield monodictyphenone. The prenyltransferase GME11375 may catalyze the addition reaction between the C5 side chains and the carbon bone of dibenzodioxocinones. The remaining biochemical reactions to the final product dibenzodioxocinones should be methylation catalyzed by methyltransferase GME11366 and reduction and lactonization reaction catalyzed by a series of oxidordeuctases. The polypeptide is Short-chain dehydrogenase/reductase GME11373 (Pestalotiopsis microspora).